The primary structure comprises 272 residues: Shikimate dehydrogenase (NADP(+)) (272 aa).

Residues 14–16 (SKS) and T61 each bind shikimate. Residue K65 is the Proton acceptor of the active site. E77 lines the NADP(+) pocket. 2 residues coordinate shikimate: N86 and D102. NADP(+)-binding positions include 126–130 (GAGGA), 149–154 (NRTVSR), and M213. Y215 serves as a coordination point for shikimate. G237 lines the NADP(+) pocket.

This sequence belongs to the shikimate dehydrogenase family. As to quaternary structure, homodimer.

It carries out the reaction shikimate + NADP(+) = 3-dehydroshikimate + NADPH + H(+). It participates in metabolic intermediate biosynthesis; chorismate biosynthesis; chorismate from D-erythrose 4-phosphate and phosphoenolpyruvate: step 4/7. Its function is as follows. Involved in the biosynthesis of the chorismate, which leads to the biosynthesis of aromatic amino acids. Catalyzes the reversible NADPH linked reduction of 3-dehydroshikimate (DHSA) to yield shikimate (SA). This is Shikimate dehydrogenase (NADP(+)) from Escherichia coli O7:K1 (strain IAI39 / ExPEC).